A 516-amino-acid chain; its full sequence is Serine carboxypeptidase-like 49 (516 aa).

The N-terminal stretch at 1-22 is a signal peptide; sequence MEKLTFLSLLLHFVVFIASTIP. A propeptide spanning residues 23-82 is cleaved from the precursor; sequence SSSFLLNDRTFERSNLPSTRAEKLIRELNLFPQQDLNVIDVADLPLTAAEGPGIVERKFV. 3 cysteine pairs are disulfide-bonded: Cys-139-Cys-379, Cys-307-Cys-322, and Cys-345-Cys-350. An N-linked (GlcNAc...) asparagine glycan is attached at Asn-157. The active site involves Ser-229. Asp-417 is an active-site residue. Residue Cys-420 coordinates substrate. Residue His-474 is part of the active site.

This sequence belongs to the peptidase S10 family. As to expression, expressed in roots, senescent leaves and flowers.

The protein localises to the secreted. Probable carboxypeptidase. This is Serine carboxypeptidase-like 49 (SCPL49) from Arabidopsis thaliana (Mouse-ear cress).